The chain runs to 347 residues: Ceramide very long chain fatty acid hydroxylase scs7 (347 aa).

At 1-156 (MASVTSEKCV…GNFLEPLTKT (156 aa)) the chain is on the cytoplasmic side. A helical membrane pass occupies residues 157–177 (PWYMIPLIWVPCVTYGFLYAC). A topological domain (lumenal) is located at residue T178. Residues 179-199 (GIPFSVAITFFIIGLFTWTLV) traverse the membrane as a helical segment. At 200-238 (EYTMHRFLFHLDEYTPDHPIFLTMHFAFHGCHHFLPADK) the chain is on the cytoplasmic side. H204, H209, H228, H231, and H232 together coordinate Zn(2+). The chain crosses the membrane as a helical span at residues 239–259 (YRLVMPPALFLIFATPWYHFI). Residue Q260 is a topological domain, lumenal. Residues 261 to 281 (LVLPHYIGVAGFSGAILGYVF) traverse the membrane as a helical segment. Over 282–347 (YDLTHYFLHH…EQGKISTKAK (66 aa)) the chain is Cytoplasmic. Zn(2+) contacts are provided by H286, H290, H306, H309, and H310.

Belongs to the sterol desaturase family. SCS7 subfamily. The cofactor is Zn(2+).

The protein localises to the endoplasmic reticulum membrane. It participates in sphingolipid metabolism. In terms of biological role, ceramide hydroxylase involved in the hydroxylation of sphingolipid-associated very long chain fatty acids. Postulated to hydroxylate the very long chain fatty acid of dihydroceramides and phytoceramides at C-2. The polypeptide is Ceramide very long chain fatty acid hydroxylase scs7 (Schizosaccharomyces pombe (strain 972 / ATCC 24843) (Fission yeast)).